We begin with the raw amino-acid sequence, 232 residues long: Translation initiation factor IF-3 (232 aa).

Disordered stretches follow at residues 1 to 21 and 184 to 232; these read MAIQ…RTNR and LQSQ…AAQR. Residues 193–208 are compositionally biased toward low complexity; it reads AAAAAAPAAAPAAGAP. Positions 209-222 are enriched in pro residues; the sequence is APTPAPAPAAPAPA. Low complexity predominate over residues 223–232; sequence PAAADPAAQR.

It belongs to the IF-3 family. In terms of assembly, monomer.

It localises to the cytoplasm. IF-3 binds to the 30S ribosomal subunit and shifts the equilibrium between 70S ribosomes and their 50S and 30S subunits in favor of the free subunits, thus enhancing the availability of 30S subunits on which protein synthesis initiation begins. The protein is Translation initiation factor IF-3 of Anaeromyxobacter sp. (strain K).